The chain runs to 63 residues: Large ribosomal subunit protein bL32 (63 aa).

The tract at residues 1-27 is disordered; sequence MANPKAKMSKSRRDKRRAQFNARTKPV. Positions 7–18 are enriched in basic residues; the sequence is KMSKSRRDKRRA.

Belongs to the bacterial ribosomal protein bL32 family.

The protein is Large ribosomal subunit protein bL32 of Chlorobium phaeobacteroides (strain DSM 266 / SMG 266 / 2430).